The primary structure comprises 428 residues: Hydrolase acrC (428 aa).

Ser-248 is a catalytic residue.

The protein belongs to the AB hydrolase superfamily. FUS2 hydrolase family.

Its pathway is secondary metabolite biosynthesis. In terms of biological role, hydrolase; part of the cluster that mediates the biosynthesis of acurin A, a highly reduced polyketide coupled to a serine via a peptide bond. The activities of the highly reducing polyketide synthase acrA and the nonribosomal peptide synthetase acrB are collectively responsible for the synthesis of the acurin A core structure with a heptaketide backbone produced by acrA covalently fused to a L-serine by acrB. After the formation of the PK-NRP hybrid product, it is detached from acrB by reductive release to set up the formation of the lactam ring by aldol condensation. The hydrolyase acrC then catalyzes water loss to generate a double bond in the ring. This double bond is probably reduced, which is followed by three oxidations at C-22 to generate the carboxylic acid moiety, involving probably the FAD-binding monooxygenase acrE and the cytochrome P450 monooxygenases acrD and acrF. Finally, a last methylation step performed by the O-methyltransferase acrG leads to the production of acurin A. In Aspergillus aculeatus (strain ATCC 16872 / CBS 172.66 / WB 5094), this protein is Hydrolase acrC.